Reading from the N-terminus, the 164-residue chain is B-phycoerythrin alpha chain (164 aa).

2 residues coordinate (2R,3E)-phycoerythrobilin: Cys-82 and Cys-139.

This sequence belongs to the phycobiliprotein family. Heteromer of 6 alpha, 6 beta and one gamma chain. Contains two covalently linked bilin chromophores.

It localises to the plastid. The protein localises to the chloroplast thylakoid membrane. Its function is as follows. Light-harvesting photosynthetic bile pigment-protein from the phycobiliprotein complex. This chain is B-phycoerythrin alpha chain (cpeA), found in Porphyridium purpureum (Red alga).